The following is a 428-amino-acid chain: Glutamyl-tRNA reductase (428 aa).

Substrate contacts are provided by residues 49–52 (TCNR), Ser-107, 112–114 (EPQ), and Gln-118. The Nucleophile role is filled by Cys-50. 187 to 192 (GAGETI) provides a ligand contact to NADP(+).

It belongs to the glutamyl-tRNA reductase family. Homodimer.

The catalysed reaction is (S)-4-amino-5-oxopentanoate + tRNA(Glu) + NADP(+) = L-glutamyl-tRNA(Glu) + NADPH + H(+). It participates in porphyrin-containing compound metabolism; protoporphyrin-IX biosynthesis; 5-aminolevulinate from L-glutamyl-tRNA(Glu): step 1/2. Catalyzes the NADPH-dependent reduction of glutamyl-tRNA(Glu) to glutamate 1-semialdehyde (GSA). This Pseudomonas fluorescens (strain Pf0-1) protein is Glutamyl-tRNA reductase.